Consider the following 399-residue polypeptide: MNIHEYQAKALLREFGVPVSRGVPVLQASEAEAAAETLGGPVWVVKSQIHAGGRGKGKFKEASAGEKGGVRLARSIDEVKTFAGQMLGATLVTAQTGPAGKQVNRLYIEEGSDIDKEFYFSALVDRETSRISFVVSTEGGMNIEEVAHKTPEKIVTFSVDPATGVMSHHGRTVARALRLRGDLGKQAEKLVTQLYDAFIARDMAMLEINPLVVTKQGELRVLDAKISFDSNALYRHSDVVALRDESEEDAKEIEASRFDLSYVALDGQIGCMVNGAGLAMATMDIIKLYGMAPANFLDVGGGATKDKVAAAFKIITADPNVKGILINIFGGIMKCDVIADGVVAAVKQVGLNVPLVVRLEGTNVDAGKKIIRESGLNVLPADDLDDAAQKIVKAVKEVA.

An ATP-grasp domain is found at 9–254 (KALLREFGVP…ESEEDAKEIE (246 aa)). ATP-binding positions include K46, 53–55 (GRG), E109, S112, and E117. Mg(2+) contacts are provided by N209 and D223. Substrate contacts are provided by residues N274 and 331-333 (GIM).

The protein belongs to the succinate/malate CoA ligase beta subunit family. In terms of assembly, heterotetramer of two alpha and two beta subunits. It depends on Mg(2+) as a cofactor.

The enzyme catalyses succinate + ATP + CoA = succinyl-CoA + ADP + phosphate. It catalyses the reaction GTP + succinate + CoA = succinyl-CoA + GDP + phosphate. Its pathway is carbohydrate metabolism; tricarboxylic acid cycle; succinate from succinyl-CoA (ligase route): step 1/1. Succinyl-CoA synthetase functions in the citric acid cycle (TCA), coupling the hydrolysis of succinyl-CoA to the synthesis of either ATP or GTP and thus represents the only step of substrate-level phosphorylation in the TCA. The beta subunit provides nucleotide specificity of the enzyme and binds the substrate succinate, while the binding sites for coenzyme A and phosphate are found in the alpha subunit. In Nitrobacter winogradskyi (strain ATCC 25391 / DSM 10237 / CIP 104748 / NCIMB 11846 / Nb-255), this protein is Succinate--CoA ligase [ADP-forming] subunit beta.